The primary structure comprises 55 residues: ATP synthase protein 8 (55 aa).

A helical membrane pass occupies residues 11 to 31 (LIMFSVTLMLLIVLVINHFML).

Belongs to the ATPase protein 8 family. F-type ATPases have 2 components, CF(1) - the catalytic core - and CF(0) - the membrane proton channel.

The protein localises to the mitochondrion membrane. Functionally, mitochondrial membrane ATP synthase (F(1)F(0) ATP synthase or Complex V) produces ATP from ADP in the presence of a proton gradient across the membrane which is generated by electron transport complexes of the respiratory chain. F-type ATPases consist of two structural domains, F(1) - containing the extramembraneous catalytic core and F(0) - containing the membrane proton channel, linked together by a central stalk and a peripheral stalk. During catalysis, ATP synthesis in the catalytic domain of F(1) is coupled via a rotary mechanism of the central stalk subunits to proton translocation. Part of the complex F(0) domain. Minor subunit located with subunit a in the membrane. The polypeptide is ATP synthase protein 8 (MT-ATP8) (Albinaria caerulea (Land snail)).